We begin with the raw amino-acid sequence, 145 residues long: Immune protein Tsi4 (145 aa).

The next 2 helical transmembrane spans lie at 9–29 (IGGLLHASLFSLLGLGLLLAG) and 109–129 (ALWGTGAFLCGFGALFGIVGF).

The protein resides in the membrane. Its function is as follows. Immunity protein that plays a role in preventing early activation of toxin Tse4. The chain is Immune protein Tsi4 from Pseudomonas aeruginosa (strain ATCC 15692 / DSM 22644 / CIP 104116 / JCM 14847 / LMG 12228 / 1C / PRS 101 / PAO1).